A 325-amino-acid chain; its full sequence is Heat-inducible transcription repressor HrcA (325 aa).

It belongs to the HrcA family.

In terms of biological role, negative regulator of class I heat shock genes (grpE-dnaK-dnaJ and groELS operons). Prevents heat-shock induction of these operons. The sequence is that of Heat-inducible transcription repressor HrcA from Staphylococcus aureus (strain JH1).